The following is a 962-amino-acid chain: Protease 3 (962 aa).

The N-terminal stretch at 1–23 (MPRSTWFKALLLLVALWGPAVQA) is a signal peptide. A Zn(2+)-binding site is contributed by His88. Glu91 functions as the Proton acceptor in the catalytic mechanism. 2 residues coordinate Zn(2+): His92 and Glu169.

This sequence belongs to the peptidase M16 family. In terms of assembly, monomer. It depends on Zn(2+) as a cofactor.

It localises to the periplasm. The catalysed reaction is Preferential cleavage of 16-Tyr-|-Leu-17 and 25-Phe-|-Tyr-26 bonds of oxidized insulin B chain. Also acts on other substrates of Mw less than 7 kDa such as insulin and glucagon.. Endopeptidase that degrades small peptides of less than 7 kDa, such as glucagon and insulin. This chain is Protease 3 (ptrA), found in Salmonella typhi.